Reading from the N-terminus, the 295-residue chain is Phosphatidylglycerol--prolipoprotein diacylglyceryl transferase (295 aa).

4 consecutive transmembrane segments (helical) span residues 28 to 48 (WYAL…VLAT), 69 to 89 (LLTW…VLFY), 101 to 121 (ILMV…VVIA), and 131 to 151 (IPKL…LLLG). Position 152 (Arg-152) interacts with a 1,2-diacyl-sn-glycero-3-phospho-(1'-sn-glycerol). Helical transmembrane passes span 195–215 (QLYE…WLVW), 224–244 (GLIT…VEFF), and 268–288 (GLTM…WFVL).

It belongs to the Lgt family.

Its subcellular location is the cell inner membrane. It carries out the reaction L-cysteinyl-[prolipoprotein] + a 1,2-diacyl-sn-glycero-3-phospho-(1'-sn-glycerol) = an S-1,2-diacyl-sn-glyceryl-L-cysteinyl-[prolipoprotein] + sn-glycerol 1-phosphate + H(+). The protein operates within protein modification; lipoprotein biosynthesis (diacylglyceryl transfer). In terms of biological role, catalyzes the transfer of the diacylglyceryl group from phosphatidylglycerol to the sulfhydryl group of the N-terminal cysteine of a prolipoprotein, the first step in the formation of mature lipoproteins. The protein is Phosphatidylglycerol--prolipoprotein diacylglyceryl transferase of Ruegeria pomeroyi (strain ATCC 700808 / DSM 15171 / DSS-3) (Silicibacter pomeroyi).